A 97-amino-acid chain; its full sequence is uncharacterized protein (97 aa).

Ser2 carries the N-acetylserine modification.

This is an uncharacterized protein from Mycobacterium tuberculosis (strain ATCC 25618 / H37Rv).